Reading from the N-terminus, the 644-residue chain is Threonine--tRNA ligase (644 aa).

One can recognise a TGS domain in the interval 1–61 (MNVSIEGQML…DGTTTIEPVY (61 aa)). The segment at 241-532 (DHRKLGQQLD…LIEQYAGAFP (292 aa)) is catalytic. Positions 333, 384, and 509 each coordinate Zn(2+).

Belongs to the class-II aminoacyl-tRNA synthetase family. Homodimer. Requires Zn(2+) as cofactor.

The protein resides in the cytoplasm. It carries out the reaction tRNA(Thr) + L-threonine + ATP = L-threonyl-tRNA(Thr) + AMP + diphosphate + H(+). Its function is as follows. Catalyzes the attachment of threonine to tRNA(Thr) in a two-step reaction: L-threonine is first activated by ATP to form Thr-AMP and then transferred to the acceptor end of tRNA(Thr). Also edits incorrectly charged L-seryl-tRNA(Thr). The protein is Threonine--tRNA ligase of Nitratidesulfovibrio vulgaris (strain ATCC 29579 / DSM 644 / CCUG 34227 / NCIMB 8303 / VKM B-1760 / Hildenborough) (Desulfovibrio vulgaris).